We begin with the raw amino-acid sequence, 965 residues long: Probable serine/threonine-protein kinase DDB_G0291516 (965 aa).

Positions 114–170 (KDSQKELLPSPQQLTPPTSLPSLPLLPLPQAPEQNEEQQLTQPPSPPSIPPPPPQKK) are disordered. Low complexity-rich tracts occupy residues 119-136 (ELLP…LPSL) and 144-155 (APEQNEEQQLTQ). The span at 156–168 (PPSPPSIPPPPPQ) shows a compositional bias: pro residues. ANK repeat units lie at residues 271–301 (KGET…HMGI) and 310–339 (LNKN…PLKM). Residues 459–739 (IDFHTQIGSA…NVKAIKKEFL (281 aa)) enclose the Protein kinase domain. Residues 465-473 (IGSAGNASV) and Lys-486 contribute to the ATP site. Residue Asp-587 is the Proton acceptor of the active site. Residues 653 to 673 (IYSLGIILWELVCVAMTGTYI) form a helical membrane-spanning segment. Residues Asn-760, Asn-765, Asn-905, Asn-909, Asn-910, Asn-914, Asn-934, and Asn-938 are each glycosylated (N-linked (GlcNAc...) asparagine). The segment covering 881–940 (NINKNKNNNNNNNNNNNNNNNINNNNTFNNSTNNNSNDNINIPYDFNNNNNNNNNSCNNS) has biased composition (low complexity). Residues 881–942 (NINKNKNNNN…NNNSCNNSKK (62 aa)) are disordered.

This sequence belongs to the protein kinase superfamily. Ser/Thr protein kinase family.

Its subcellular location is the membrane. It carries out the reaction L-seryl-[protein] + ATP = O-phospho-L-seryl-[protein] + ADP + H(+). The catalysed reaction is L-threonyl-[protein] + ATP = O-phospho-L-threonyl-[protein] + ADP + H(+). This is Probable serine/threonine-protein kinase DDB_G0291516 from Dictyostelium discoideum (Social amoeba).